The sequence spans 145 residues: Large ribosomal subunit protein uL15 (145 aa).

Positions 1 to 11 (MELHSLKSTPG) are enriched in polar residues. The segment at 1–48 (MELHSLKSTPGSRKEKHRKGRGHAAGKGKQAGKGQSGQRKRSKVRLGF) is disordered. Residues 14–26 (KEKHRKGRGHAAG) show a composition bias toward basic residues.

The protein belongs to the universal ribosomal protein uL15 family. Part of the 50S ribosomal subunit.

Functionally, binds to the 23S rRNA. This is Large ribosomal subunit protein uL15 from Mycoplasmopsis pulmonis (strain UAB CTIP) (Mycoplasma pulmonis).